The sequence spans 732 residues: Catalase-peroxidase (732 aa).

Residues 1–11 (MDAKTDDKDGG) show a composition bias toward basic and acidic residues. The interval 1-24 (MDAKTDDKDGGKCPFPHGGGRGRR) is disordered. A cross-link (tryptophyl-tyrosyl-methioninium (Trp-Tyr) (with M-245)) is located at residues 97–219 (WHSAGTYRTT…LGAVQMGLIY (123 aa)). Histidine 98 (proton acceptor) is an active-site residue. The tryptophyl-tyrosyl-methioninium (Tyr-Met) (with W-97) cross-link spans 219–245 (YVNPEGPNGNPDPVAAAKDIRETFARM). Histidine 260 serves as a coordination point for heme b.

It belongs to the peroxidase family. Peroxidase/catalase subfamily. Homodimer or homotetramer. The cofactor is heme b. Post-translationally, formation of the three residue Trp-Tyr-Met cross-link is important for the catalase, but not the peroxidase activity of the enzyme.

The enzyme catalyses H2O2 + AH2 = A + 2 H2O. It carries out the reaction 2 H2O2 = O2 + 2 H2O. Bifunctional enzyme with both catalase and broad-spectrum peroxidase activity. The polypeptide is Catalase-peroxidase (Rhodopseudomonas palustris (strain HaA2)).